Here is a 541-residue protein sequence, read N- to C-terminus: MSSEMEPLLLAWSYFRRRKFQLCADLCTQMLEKSPYDQEPDPELPVHQAAWILKARALTEMVYIDEIDVDQEGIAEMMLDENAIAQVPRPGTSLKLPGTNQTGGPSQAVRPITQAGRPITGFLRPSTQSGRPGTMEQAIRTPRTAYTARPITSSSGRFVRLGTASMLTSPDGPFINLSRLNLTKYSQKPKLAKALFEYIFHHENDVKTIHLEDVVLHLGIYPFLLRNKNHIEKNALDLAALSTEHSQYKDWWWKVQIGKCYYRLGMYREAEKQFKSALKQQEMVDTFLYLAKVYVSLDQPVTALNLFKQGLDKFPGEVTLLCGIARIYEEMNNMSSAAEYYKEVLKQDNTHVEAIACIGSNHFYSDQPEIALRFYRRLLQMGIYNGQLFNNLGLCCFYAQQYDMTLTSFERALSLAENEEEAADVWYNLGHVAVGIGDTNLAHQCFRLALVNNNNHAEAYNNLAVLEMRKGHVEQARALLQTASSLAPHMYEPHFNFATISDKIGDLQRSYVAAQKSEAAFPDHVDTQHLIKQLRQHFAML.

The stretch at 14–47 (YFRRRKFQLCADLCTQMLEKSPYDQEPDPELPVH) is one TPR 1 repeat. Positions 118–137 (PITGFLRPSTQSGRPGTMEQ) are disordered. TPR repeat units lie at residues 251–284 (WWWKVQIGKCYYRLGMYREAEKQFKSALKQQEMV), 285–317 (DTFLYLAKVYVSLDQPVTALNLFKQGLDKFPGE), 318–351 (VTLLCGIARIYEEMNNMSSAAEYYKEVLKQDNTH), 352–385 (VEAIACIGSNHFYSDQPEIALRFYRRLLQMGIYN), 386–419 (GQLFNNLGLCCFYAQQYDMTLTSFERALSLAENE), 423–456 (ADVWYNLGHVAVGIGDTNLAHQCFRLALVNNNNH), and 457–490 (AEAYNNLAVLEMRKGHVEQARALLQTASSLAPHM).

In terms of assembly, part of BBSome complex, that contains BBS1, BBS2, BBS4, BBS5, BBS7, BBS8/TTC8, BBS9 and BBIP10. Interacts with PCM1. Interacts with CCDC28B. Interacts with PKD1. As to expression, widely expressed.

It localises to the cytoplasm. Its subcellular location is the cytoskeleton. The protein localises to the microtubule organizing center. It is found in the centrosome. The protein resides in the cell projection. It localises to the cilium membrane. Its subcellular location is the centriolar satellite. The protein localises to the cilium. Functionally, the BBSome complex is thought to function as a coat complex required for sorting of specific membrane proteins to the primary cilia. The BBSome complex is required for ciliogenesis but is dispensable for centriolar satellite function. This ciliogenic function is mediated in part by the Rab8 GDP/GTP exchange factor, which localizes to the basal body and contacts the BBSome. Rab8(GTP) enters the primary cilium and promotes extension of the ciliary membrane. Firstly the BBSome associates with the ciliary membrane and binds to RAB3IP/Rabin8, the guanosyl exchange factor (GEF) for Rab8 and then the Rab8-GTP localizes to the cilium and promotes docking and fusion of carrier vesicles to the base of the ciliary membrane. The BBSome complex, together with the LTZL1, controls SMO ciliary trafficking and contributes to the sonic hedgehog (SHH) pathway regulation. Required for proper BBSome complex assembly and its ciliary localization. This is Tetratricopeptide repeat protein 8 (TTC8) from Homo sapiens (Human).